An 812-amino-acid polypeptide reads, in one-letter code: MRYIRSIYIFCSIVTSVRSGASELPEERELTTNFSSMSLTKVPEGLTPITTTLDLSYNLLFQLQHSDFRSLSKLKVLILCHNRIQELDIKTFEFNKELSYLDVSNNRLKSVTWFSLAGLRHLDLSFNDFDTLPISVETGNMSHLETLGLSGAKIQKSDFQKIAHLQLNTVLLGLRTLSHYEEGSLPILNTTRLHIVLPVNTNFWVLLHDGIKTSKILEVINIDLQKSQFTSYESQQIPILENAKTSILLLNKVDLSWDDLFLIFQLVWHTSVEYFQIQHVTFGGKVYLDHNSFDYSNTVMRTIKLEHVHFRIFNIPQESIYLLFTKMDIENLTISDAQMPHMLFPMYPTRFQYLNFANNILTDDVFKKSIQLPHLKTLILKDNKLETLSLVSHFASNTSLRHLDLSENLLQHENDENCLWPETLVTMNLSFNKFADSVFGCLPRNIQILDLNSNKIQTVPKAITHLTSLRELNLAFNFLTDLPGCSHFRRLLVLNVEMNLILSSSLDFFQSCQEVKTLNAGRNPFRCTCELRDFIQLGKYSEGMMVGWSDSYICEYPLNLKGTQLKDVHLPEISCNTGLLIVTIVVVMLVLGMAVAFCCLHFDLPWYLRMLHQWTQTWLRVRKTTQEQLKRSVQFHVFISYSEHDSAWVKYELIPSLEKEDGSVLICLHEGNSDPGKSMTEDTINCIEKSYKSIFVLSPSFVQTEWCHYEPYFAHHNLFHESLDYIILILLEPIPLYCIPTRYPELKALMEKKAYLEWPKDRRKCGLFWANLRAALHVNLLDTRGTCELQTFTELNEGFGGSAISLIRTDCL.

The first 19 residues, M1 to S19, serve as a signal peptide directing secretion. The Extracellular segment spans residues G20–T577. LRR repeat units follow at residues L24–L46, I49–S70, K73–F94, E97–G118, and L119–G139. An N-linked (GlcNAc...) asparagine glycan is attached at N33. The N-linked (GlcNAc...) asparagine glycan is linked to N140. One copy of the LRR 6 repeat lies at H143–Q166. N189 carries an N-linked (GlcNAc...) asparagine glycan. LRR repeat units follow at residues S296–Y321, T325–P348, R350–P373, and H374–A395. N331 carries N-linked (GlcNAc...) asparagine glycosylation. Residue N397 is glycosylated (N-linked (GlcNAc...) asparagine). LRR repeat units lie at residues S399 to W420, T423 to P443, N445 to T467, S468 to R489, and R490 to Q510. An N-linked (GlcNAc...) asparagine glycan is attached at N428. The LRRCT domain maps to N523–T577. Residues G578–C598 form a helical membrane-spanning segment. Residues C599–L812 lie on the Cytoplasmic side of the membrane. A TIR domain is found at V633–L776.

This sequence belongs to the Toll-like receptor family. As to quaternary structure, binds MYD88 via their respective TIR domains.

It is found in the membrane. Participates in the innate immune response to microbial agents. Acts via MYD88 and TRAF6, leading to NF-kappa-B activation, cytokine secretion and the inflammatory response. This chain is Toll-like receptor 10 (TLR10), found in Bos taurus (Bovine).